Here is a 185-residue protein sequence, read N- to C-terminus: Elongation factor P (185 aa).

The protein belongs to the elongation factor P family.

The protein resides in the cytoplasm. Its pathway is protein biosynthesis; polypeptide chain elongation. In terms of biological role, involved in peptide bond synthesis. Stimulates efficient translation and peptide-bond synthesis on native or reconstituted 70S ribosomes in vitro. Probably functions indirectly by altering the affinity of the ribosome for aminoacyl-tRNA, thus increasing their reactivity as acceptors for peptidyl transferase. In Desulfitobacterium hafniense (strain Y51), this protein is Elongation factor P.